The chain runs to 148 residues: Large ribosomal subunit protein uL15 (148 aa).

Residues 12-52 (ERKNRKRVGRGGGSGWGGTSGKGHKGQNARSGGGVPAWFEG) form a disordered region. Positions 21 to 32 (RGGGSGWGGTSG) are enriched in gly residues.

It belongs to the universal ribosomal protein uL15 family. In terms of assembly, part of the 50S ribosomal subunit.

Its function is as follows. Binds to the 23S rRNA. The sequence is that of Large ribosomal subunit protein uL15 from Maridesulfovibrio salexigens (strain ATCC 14822 / DSM 2638 / NCIMB 8403 / VKM B-1763) (Desulfovibrio salexigens).